Here is a 477-residue protein sequence, read N- to C-terminus: Histone-lysine N-methyltransferase SUV39H2 (477 aa).

The interval 1-59 (MATARAKARGSEAGARCHRAPGPPPRPKARRTARRRRAETLTARRSRPSAGERRAGSQR) is disordered. Residues 27 to 37 (PKARRTARRRR) are compositionally biased toward basic residues. In terms of domain architecture, Chromo spans 118–176 (YEVEYLCDYKVAKGVEYYLVKWKGWPDSTNTWEPLRNLRCPQLLRQFSDDKKTYLAQER). The region spanning 256 to 314 (FGCSCTDCFFDKCCPAEAGVVLAYNKKQQIKIQPGTPIYECNSRCRCGPECPNRIVQKG) is the Pre-SET domain. Zn(2+)-binding residues include cysteine 258, cysteine 260, cysteine 263, cysteine 268, cysteine 269, cysteine 296, cysteine 300, cysteine 302, and cysteine 306. Residues 317 to 440 (YSLCIFKTSN…AGEELTFDYQ (124 aa)) enclose the SET domain. S-adenosyl-L-methionine is bound by residues 328-330 (CGW), tyrosine 371, and 397-398 (NH). Cysteine 400 lines the Zn(2+) pocket. 3 positions are modified to phosphoserine: serine 448, serine 451, and serine 455. In terms of domain architecture, Post-SET spans 461-477 (VRTQCKCGAETCRGYLN). Residues cysteine 465, cysteine 467, and cysteine 472 each coordinate Zn(2+).

Belongs to the class V-like SAM-binding methyltransferase superfamily. Histone-lysine methyltransferase family. Suvar3-9 subfamily. In terms of assembly, interacts with SMAD5. The large PER complex involved in the histone methylation is composed of at least PER2, CBX3, TRIM28, SUV39H1 and/or SUV39H2; CBX3 mediates the formation of the complex. Ubiquitinated by the DCX(DCAF13) E3 ubiquitin ligase complex, leading to its degradation. In terms of tissue distribution, testis specific; predominant expression in type B spermatogonia and preleptotene spermatocytes.

It is found in the nucleus. Its subcellular location is the chromosome. The protein resides in the centromere. It catalyses the reaction L-lysyl(9)-[histone H3] + 3 S-adenosyl-L-methionine = N(6),N(6),N(6)-trimethyl-L-lysyl(9)-[histone H3] + 3 S-adenosyl-L-homocysteine + 3 H(+). In terms of biological role, histone methyltransferase that specifically trimethylates 'Lys-9' of histone H3 using monomethylated H3 'Lys-9' as substrate. H3 'Lys-9' trimethylation represents a specific tag for epigenetic transcriptional repression by recruiting HP1 (CBX1, CBX3 and/or CBX5) proteins to methylated histones. Mainly functions in heterochromatin regions, thereby playing a central role in the establishment of constitutive heterochromatin at pericentric and telomere regions. H3 'Lys-9' trimethylation is also required to direct DNA methylation at pericentric repeats. SUV39H1 is targeted to histone H3 via its interaction with RB1 and is involved in many processes, such as cell cycle regulation, transcriptional repression and regulation of telomere length. May participate in regulation of higher-order chromatin organization during spermatogenesis. Recruited by the large PER complex to the E-box elements of the circadian target genes such as PER2 itself or PER1, contributes to the conversion of local chromatin to a heterochromatin-like repressive state through H3 'Lys-9' trimethylation. This chain is Histone-lysine N-methyltransferase SUV39H2 (Suv39h2), found in Mus musculus (Mouse).